Consider the following 897-residue polypeptide: Pre-mRNA-splicing factor CWC22 homolog (897 aa).

The span at 1–10 (MSSSRSQSPE) shows a compositional bias: polar residues. The segment at 1-155 (MSSSRSQSPE…EKKKKEPLDI (155 aa)) is disordered. Basic and acidic residues-rich tracts occupy residues 36–54 (SSEKSASRSQSPRESREVS), 93–107 (RSKETRESESPEKSP), and 131–155 (RSSERKQSEEPAPLPEKKKKEPLDI). Residues 194–382 (KKKIHGLVNR…ETAMQIRKDK (189 aa)) form the MIF4G domain. Residues 444 to 472 (NADISDEDGGDELDDEEEGSDVEEAPKKT) form a disordered region. The segment covering 447–466 (ISDEDGGDELDDEEEGSDVE) has biased composition (acidic residues). The region spanning 485-601 (AFRREVYLTM…DWKILADMKM (117 aa)) is the MI domain. Low complexity-rich tracts occupy residues 689–710 (LDQLKAESSSDSSSSSDSSDSS) and 720–730 (DSSSDSSSSSE). The segment at 689–897 (LDQLKAESSS…VESDDRRRRR (209 aa)) is disordered. Positions 743–897 (NSEESSKKKE…VESDDRRRRR (155 aa)) are enriched in basic and acidic residues.

This sequence belongs to the CWC22 family. Expressed in germ cells, oocytes, and sperm cells.

The protein localises to the nucleus. It localises to the nucleus speckle. Required for pre-mRNA splicing and for exon-junction complex (EJC) assembly. Hinders EIF4A3 from non-specifically binding RNA and escorts it to the splicing machinery to promote EJC assembly on mature mRNAs. Through its role in EJC assembly, required for nonsense-mediated mRNA decay. Plays a role in the nuclear retention of unspliced mRNAs. Plays a role in sex determination. Required for early embryogenesis and tissue differentiation. This chain is Pre-mRNA-splicing factor CWC22 homolog, found in Caenorhabditis elegans.